The primary structure comprises 572 residues: EF-hand calcium-binding domain-containing protein 12 (572 aa).

Disordered stretches follow at residues 62 to 85 (VPRKEDQTPLNPASQPQAPPKPIP) and 146 to 169 (EQSAQPNASQATTRTTRKKAPRLS). The EF-hand domain occupies 196–231 (SRKIKILEIFHKVGQGENQRITREEFIAAVKAVGVP). Position 212 (E212) interacts with Ca(2+).

The polypeptide is EF-hand calcium-binding domain-containing protein 12 (EFCAB12) (Homo sapiens (Human)).